The chain runs to 359 residues: Phospho-N-acetylmuramoyl-pentapeptide-transferase (359 aa).

10 helical membrane passes run 27–47, 71–91, 93–113, 134–154, 170–190, 203–223, 234–254, 262–282, 286–306, and 336–356; these read IGAAVCAFLLVLFLGPLFIRT, VPTMGGLLILLSVTVSTLLWA, LDNPLIWLVLLVTLFFGMIGA, LLLQIAGALIVGFFVYLHPGY, LGWFYIVFAVIVIVGASNAVN, MVVSSAVYLLFAYLAGNVVLA, SGELAIFCGTLFGACLGFLWF, FMGDVGSLALGGALGSIAIII, FLLAIVGGVFVMEALSVMLQV, and KVVVRFWIVSIILGLFAIATL.

The protein belongs to the glycosyltransferase 4 family. MraY subfamily. Mg(2+) is required as a cofactor.

The protein resides in the cell inner membrane. It catalyses the reaction UDP-N-acetyl-alpha-D-muramoyl-L-alanyl-gamma-D-glutamyl-meso-2,6-diaminopimeloyl-D-alanyl-D-alanine + di-trans,octa-cis-undecaprenyl phosphate = di-trans,octa-cis-undecaprenyl diphospho-N-acetyl-alpha-D-muramoyl-L-alanyl-D-glutamyl-meso-2,6-diaminopimeloyl-D-alanyl-D-alanine + UMP. It functions in the pathway cell wall biogenesis; peptidoglycan biosynthesis. In terms of biological role, catalyzes the initial step of the lipid cycle reactions in the biosynthesis of the cell wall peptidoglycan: transfers peptidoglycan precursor phospho-MurNAc-pentapeptide from UDP-MurNAc-pentapeptide onto the lipid carrier undecaprenyl phosphate, yielding undecaprenyl-pyrophosphoryl-MurNAc-pentapeptide, known as lipid I. The chain is Phospho-N-acetylmuramoyl-pentapeptide-transferase from Desulfotalea psychrophila (strain LSv54 / DSM 12343).